A 328-amino-acid chain; its full sequence is Phenylalanine--tRNA ligase alpha subunit (328 aa).

Position 253 (Glu-253) interacts with Mg(2+).

Belongs to the class-II aminoacyl-tRNA synthetase family. Phe-tRNA synthetase alpha subunit type 1 subfamily. In terms of assembly, tetramer of two alpha and two beta subunits. Mg(2+) serves as cofactor.

Its subcellular location is the cytoplasm. It carries out the reaction tRNA(Phe) + L-phenylalanine + ATP = L-phenylalanyl-tRNA(Phe) + AMP + diphosphate + H(+). The sequence is that of Phenylalanine--tRNA ligase alpha subunit from Coxiella burnetii (strain Dugway 5J108-111).